The chain runs to 514 residues: UDP-N-acetylmuramoyl-L-alanyl-D-glutamate--2,6-diaminopimelate ligase (514 aa).

A UDP-N-acetyl-alpha-D-muramoyl-L-alanyl-D-glutamate-binding site is contributed by threonine 37. Residue glycine 125 to serine 131 coordinates ATP. Residues threonine 167–threonine 168, serine 194, glutamine 200, and arginine 202 contribute to the UDP-N-acetyl-alpha-D-muramoyl-L-alanyl-D-glutamate site. Residue lysine 234 is modified to N6-carboxylysine. Meso-2,6-diaminopimelate contacts are provided by residues arginine 406, aspartate 430–arginine 433, glycine 481, and glutamate 485. Positions aspartate 430–arginine 433 match the Meso-diaminopimelate recognition motif motif.

Belongs to the MurCDEF family. MurE subfamily. It depends on Mg(2+) as a cofactor. Carboxylation is probably crucial for Mg(2+) binding and, consequently, for the gamma-phosphate positioning of ATP.

It is found in the cytoplasm. The catalysed reaction is UDP-N-acetyl-alpha-D-muramoyl-L-alanyl-D-glutamate + meso-2,6-diaminopimelate + ATP = UDP-N-acetyl-alpha-D-muramoyl-L-alanyl-gamma-D-glutamyl-meso-2,6-diaminopimelate + ADP + phosphate + H(+). Its pathway is cell wall biogenesis; peptidoglycan biosynthesis. Functionally, catalyzes the addition of meso-diaminopimelic acid to the nucleotide precursor UDP-N-acetylmuramoyl-L-alanyl-D-glutamate (UMAG) in the biosynthesis of bacterial cell-wall peptidoglycan. This chain is UDP-N-acetylmuramoyl-L-alanyl-D-glutamate--2,6-diaminopimelate ligase, found in Ralstonia nicotianae (strain ATCC BAA-1114 / GMI1000) (Ralstonia solanacearum).